A 428-amino-acid polypeptide reads, in one-letter code: 3-phosphoshikimate 1-carboxyvinyltransferase (428 aa).

Residues K22, S23, and R27 each coordinate 3-phosphoshikimate. Position 22 (K22) interacts with phosphoenolpyruvate. The phosphoenolpyruvate site is built by G96 and R124. 3-phosphoshikimate-binding residues include S169, S170, Q171, S197, D313, N336, and K340. Q171 provides a ligand contact to phosphoenolpyruvate. D313 functions as the Proton acceptor in the catalytic mechanism. Positions 344, 386, and 411 each coordinate phosphoenolpyruvate.

It belongs to the EPSP synthase family. In terms of assembly, monomer.

Its subcellular location is the cytoplasm. The catalysed reaction is 3-phosphoshikimate + phosphoenolpyruvate = 5-O-(1-carboxyvinyl)-3-phosphoshikimate + phosphate. It participates in metabolic intermediate biosynthesis; chorismate biosynthesis; chorismate from D-erythrose 4-phosphate and phosphoenolpyruvate: step 6/7. Functionally, catalyzes the transfer of the enolpyruvyl moiety of phosphoenolpyruvate (PEP) to the 5-hydroxyl of shikimate-3-phosphate (S3P) to produce enolpyruvyl shikimate-3-phosphate and inorganic phosphate. The sequence is that of 3-phosphoshikimate 1-carboxyvinyltransferase from Xenorhabdus nematophila (strain ATCC 19061 / DSM 3370 / CCUG 14189 / LMG 1036 / NCIMB 9965 / AN6).